The chain runs to 230 residues: UPF0173 metal-dependent hydrolase RSKD131_0588 (230 aa).

Belongs to the UPF0173 family.

This chain is UPF0173 metal-dependent hydrolase RSKD131_0588, found in Cereibacter sphaeroides (strain KD131 / KCTC 12085) (Rhodobacter sphaeroides).